We begin with the raw amino-acid sequence, 608 residues long: Threonine--tRNA ligase (608 aa).

Positions 1–145 (MKTLLIHAKH…TIKPGRRVRP (145 aa)) are editing domain. 2 catalytic regions span residues 192-489 (PKYL…PSLP) and 193-489 (KYLE…PSLP). The Zn(2+) site is built by Cys-286, His-337, and His-458.

The protein belongs to the class-II aminoacyl-tRNA synthetase family. As to quaternary structure, homodimer. The cofactor is Zn(2+).

The protein resides in the cytoplasm. The enzyme catalyses tRNA(Thr) + L-threonine + ATP = L-threonyl-tRNA(Thr) + AMP + diphosphate + H(+). Catalyzes the attachment of threonine to tRNA(Thr) in a two-step reaction: L-threonine is first activated by ATP to form Thr-AMP and then transferred to the acceptor end of tRNA(Thr). Also edits incorrectly charged L-seryl-tRNA(Thr). The chain is Threonine--tRNA ligase from Thermofilum pendens (strain DSM 2475 / Hrk 5).